The following is a 211-amino-acid chain: Ribosomal RNA small subunit methyltransferase G (211 aa).

S-adenosyl-L-methionine is bound by residues Gly72, Phe77, 125-126 (IE), and Arg141.

It belongs to the methyltransferase superfamily. RNA methyltransferase RsmG family.

The protein localises to the cytoplasm. The enzyme catalyses guanosine(527) in 16S rRNA + S-adenosyl-L-methionine = N(7)-methylguanosine(527) in 16S rRNA + S-adenosyl-L-homocysteine. In terms of biological role, specifically methylates the N7 position of guanine in position 527 of 16S rRNA. This is Ribosomal RNA small subunit methyltransferase G from Allorhizobium ampelinum (strain ATCC BAA-846 / DSM 112012 / S4) (Agrobacterium vitis (strain S4)).